Consider the following 1050-residue polypeptide: Valine--tRNA ligase (1050 aa).

Residues 37-57 are compositionally biased toward basic and acidic residues; it reads EKKAAASDKPVKEAKAKKEQT. Residues 37-72 form a disordered region; it reads EKKAAASDKPVKEAKAKKEQTVEAAEPVDQTPTGQR. The 'HIGH' region signature appears at 127–137; it reads PNVTGNLHVGH. The 'KMSKS' region signature appears at 642–646; that stretch reads KMSKS. Lys645 serves as a coordination point for ATP.

Belongs to the class-I aminoacyl-tRNA synthetase family.

The enzyme catalyses tRNA(Val) + L-valine + ATP = L-valyl-tRNA(Val) + AMP + diphosphate. In Caenorhabditis elegans, this protein is Valine--tRNA ligase.